A 203-amino-acid polypeptide reads, in one-letter code: Protein-methionine-sulfoxide reductase heme-binding subunit MsrQ (203 aa).

Helical transmembrane passes span 10–30, 42–62, 75–95, 110–130, 147–167, and 169–189; these read IFVV…MSLL, LGLG…LQKL, LGLW…FFIL, PYII…ITSN, LVYA…RSDL, and EWSI…PAVA.

It belongs to the MsrQ family. Heterodimer of a catalytic subunit (MsrP) and a heme-binding subunit (MsrQ). FMN serves as cofactor. Requires heme b as cofactor.

Its subcellular location is the cell inner membrane. Its function is as follows. Part of the MsrPQ system that repairs oxidized periplasmic proteins containing methionine sulfoxide residues (Met-O), using respiratory chain electrons. Thus protects these proteins from oxidative-stress damage caused by reactive species of oxygen and chlorine generated by the host defense mechanisms. MsrPQ is essential for the maintenance of envelope integrity under bleach stress, rescuing a wide series of structurally unrelated periplasmic proteins from methionine oxidation. MsrQ provides electrons for reduction to the reductase catalytic subunit MsrP, using the quinone pool of the respiratory chain. The sequence is that of Protein-methionine-sulfoxide reductase heme-binding subunit MsrQ from Pseudomonas putida (strain GB-1).